Consider the following 67-residue polypeptide: Conotoxin Cl6.8 (67 aa).

A signal peptide spans Met1–Ala22. Residues Asn23–Ser39 constitute a propeptide that is removed on maturation. 3 cysteine pairs are disulfide-bonded: Cys43–Cys58, Cys50–Cys62, and Cys57–Cys66. The residue at position 66 (Cys66) is a Cysteine amide.

Belongs to the conotoxin O1 superfamily. Expressed by the venom duct.

Its subcellular location is the secreted. This chain is Conotoxin Cl6.8, found in Californiconus californicus (California cone).